The primary structure comprises 318 residues: Basic leucine zipper (bZIP) transcription factor atfB (318 aa).

The segment at 114-157 is disordered; it reads FNSSPPEYAPPKHRSSLSEQSQTDGYGVSTRRRKASAIDQCEQQ. A basic motif region spans residues 160-199; that stretch reads REKREKFLERNRLAASKCRQKKKEHTKLLETRFREVSNKK. The region spanning 160–223 is the bZIP domain; it reads REKREKFLER…LNLKNEMLRH (64 aa). The interval 202–216 is leucine-zipper; sequence LESEIEHLRSEVLNL. The tract at residues 275 to 301 is disordered; that stretch reads DGPMQLPSEMGSPLDQRRDSEQSIMTE.

The protein belongs to the bZIP family. ATF subfamily.

It localises to the nucleus. Its function is as follows. Transcription factor that acts as a key player in the regulatory circuit that integrates secondary metabolism and cellular response to oxidative stress. Regulates the genes involved in development and stress response through direct binding to their promoters. Particularly involved in the resistance to oxidative stress in asexual conidiospores. The chain is Basic leucine zipper (bZIP) transcription factor atfB from Aspergillus oryzae (strain ATCC 42149 / RIB 40) (Yellow koji mold).